The chain runs to 360 residues: Phospho-N-acetylmuramoyl-pentapeptide-transferase (360 aa).

The next 10 helical transmembrane spans lie at 26-46, 72-92, 94-114, 132-152, 168-188, 199-219, 236-256, 263-283, 288-308, and 338-358; these read AIVSLLTALFISLWMGPRMIA, PTMGGIMILTSITVSVLLWAY, SNPYVWCVLFVLVGYGIVGFV, WKYFWQSAIALVVAFVMYMIG, VMPQLGLLYLLLAYFVIVGTS, GLAIMPTVFVAAGFALVAWAT, AGELVIVCTAIVGAGLGFLWF, VFMGDVGSLALGGALGTIAVL, FLLVIMGGVFVVETLSVILQV, and VIVRFWIISLMLVLIGLATLK.

The protein belongs to the glycosyltransferase 4 family. MraY subfamily. Mg(2+) is required as a cofactor.

Its subcellular location is the cell inner membrane. The enzyme catalyses UDP-N-acetyl-alpha-D-muramoyl-L-alanyl-gamma-D-glutamyl-meso-2,6-diaminopimeloyl-D-alanyl-D-alanine + di-trans,octa-cis-undecaprenyl phosphate = di-trans,octa-cis-undecaprenyl diphospho-N-acetyl-alpha-D-muramoyl-L-alanyl-D-glutamyl-meso-2,6-diaminopimeloyl-D-alanyl-D-alanine + UMP. The protein operates within cell wall biogenesis; peptidoglycan biosynthesis. Functionally, catalyzes the initial step of the lipid cycle reactions in the biosynthesis of the cell wall peptidoglycan: transfers peptidoglycan precursor phospho-MurNAc-pentapeptide from UDP-MurNAc-pentapeptide onto the lipid carrier undecaprenyl phosphate, yielding undecaprenyl-pyrophosphoryl-MurNAc-pentapeptide, known as lipid I. The sequence is that of Phospho-N-acetylmuramoyl-pentapeptide-transferase from Erwinia tasmaniensis (strain DSM 17950 / CFBP 7177 / CIP 109463 / NCPPB 4357 / Et1/99).